We begin with the raw amino-acid sequence, 225 residues long: 2-C-methyl-D-erythritol 4-phosphate cytidylyltransferase (225 aa).

The protein belongs to the IspD/TarI cytidylyltransferase family. IspD subfamily.

The enzyme catalyses 2-C-methyl-D-erythritol 4-phosphate + CTP + H(+) = 4-CDP-2-C-methyl-D-erythritol + diphosphate. Its pathway is isoprenoid biosynthesis; isopentenyl diphosphate biosynthesis via DXP pathway; isopentenyl diphosphate from 1-deoxy-D-xylulose 5-phosphate: step 2/6. Functionally, catalyzes the formation of 4-diphosphocytidyl-2-C-methyl-D-erythritol from CTP and 2-C-methyl-D-erythritol 4-phosphate (MEP). The sequence is that of 2-C-methyl-D-erythritol 4-phosphate cytidylyltransferase from Prochlorococcus marinus (strain MIT 9313).